Reading from the N-terminus, the 213-residue chain is Na(+)-translocating NADH-quinone reductase subunit D (213 aa).

Transmembrane regions (helical) follow at residues 21 to 41 (ILIAILGICSALAVTTTVQTA), 42 to 62 (ITMGIAVSIVTGCSSFFVSLL), 77 to 97 (IIISLFVIVIDQFLKAFFFDI), 101 to 121 (LSVFVGLIITNCIVMGRSESL), 131 to 151 (FLDGFASGLGYGWVLLVIGVI), 153 to 173 (ELFGFGTLMGFRIIPQFVYAS), and 183 to 203 (LSLMVLAPSAFFLLGIMIWLV).

It belongs to the NqrDE/RnfAE family. Composed of six subunits; NqrA, NqrB, NqrC, NqrD, NqrE and NqrF.

The protein resides in the cell inner membrane. It catalyses the reaction a ubiquinone + n Na(+)(in) + NADH + H(+) = a ubiquinol + n Na(+)(out) + NAD(+). Its function is as follows. NQR complex catalyzes the reduction of ubiquinone-1 to ubiquinol by two successive reactions, coupled with the transport of Na(+) ions from the cytoplasm to the periplasm. NqrA to NqrE are probably involved in the second step, the conversion of ubisemiquinone to ubiquinol. This chain is Na(+)-translocating NADH-quinone reductase subunit D, found in Chlamydia pneumoniae (Chlamydophila pneumoniae).